The sequence spans 1912 residues: MEQDRTTHAEGTRLSPFLIAPPSPISHTEPLAVKLQNGSPLAERPHPEVNGDTKWQSSQSCYGISHMKGSQSSHESPHEDRGYSRCLQNGGIKRTVSEPSLSGLHPNKILKLDQKAKGESNIFEESQERNHGKSSRQPNVSGLSDNGEPVTSTTQESSGADAFPTRNYNGVEIQVLNEQEGEKGRSVTLLKNKIVLMPNGATVSAHSEENTRGELLEKTQCYPDCVSIAVQSTASHVNTPSSQAAIELSHEIPQPSLTSAQINFSQTSSLQLPPEPAAMVTKACDADNASKPAIVPGTCPFQKAEHQQKSALDIGPSRAENKTIQGSMELFAEEYYPSSDRNLQASHGSSEQYSKQKETNGAYFRQSSKFPKDSISPTTVTPPSQSLLAPRLVLQPPLEGKGALNDVALEEHHDYPNRSNRTLLREGKIDHQPKTSSSQSLNPSVHTPNPPLMLPEQHQNDCGSPSPEKSRKMSEYLMYYLPNHGHSGGLQEHSQYLMGHREQEIPKDANGKQTQGSVQAAPGWIELKAPNLHEALHQTKRKDISLHSVLHSQTGPVNQMSSKQSTGNVNMPGGFQRLPYLQKTAQPEQKAQMYQVQVNQGPSPGMGDQHLQFQKALYQECIPRTDPSSEAHPQAPSVPQYHFQQRVNPSSDKHLSQQATETQRLSGFLQHTPQTQASQTPASQNSNFPQICQQQQQQQLQRKNKEQMPQTFSHLQGSNDKQREGSCFGQIKVEESFCVGNQYSKSSNFQTHNNTQGGLEQVQNINKNFPYSKILTPNSSNLQILPSNDTHPACEREQALHPVGSKTSNLQNMQYFPNNVTPNQDVHRCFQEQAQKPQQASSLQGLKDRSQGESPAPPAEAAQQRYLVHNEAKALPVPEQGGSQTQTPPQKDTQKHAALRWLLLQKQEQQQTQQSQPGHNQMLRPIKTEPVSKPSSYRYPLSPPQENMSSRIKQEISSPSRDNGQPKSIIETMEQHLKQFQLKSLCDYKALTLKSQKHVKVPTDIQAAESENHARAAEPQATKSTDCSVLDDVSESDTPGEQSQNGKCEGCNPDKDEAPYYTHLGAGPDVAAIRTLMEERYGEKGKAIRIEKVIYTGKEGKSSQGCPIAKWVYRRSSEEEKLLCLVRVRPNHTCETAVMVIAIMLWDGIPKLLASELYSELTDILGKCGICTNRRCSQNETRNCCCQGENPETCGASFSFGCSWSMYYNGCKFARSKKPRKFRLHGAEPKEEERLGSHLQNLATVIAPIYKKLAPDAYNNQVEFEHQAPDCCLGLKEGRPFSGVTACLDFSAHSHRDQQNMPNGSTVVVTLNREDNREVGAKPEDEQFHVLPMYIIAPEDEFGSTEGQEKKIRMGSIEVLQSFRRRRVIRIGELPKSCKKKAEPKKAKTKKAARKRSSLENCSSRTEKGKSSSHTKLMENASHMKQMTAQPQLSGPVIRQPPTLQRHLQQGQRPQQPQPPQPQPQTTPQPQPQPQHIMPGNSQSVGSHCSGSTSVYTRQPTPHSPYPSSAHTSDIYGDTNHVNFYPTSSHASGSYLNPSNYMNPYLGLLNQNNQYAPFPYNGSVPVDNGSPFLGSYSPQAQSRDLHRYPNQDHLTNQNLPPIHTLHQQTFGDSPSKYLSYGNQNMQRDAFTTNSTLKPNVHHLATFSPYPTPKMDSHFMGAASRSPYSHPHTDYKTSEHHLPSHTIYSYTAAASGSSSSHAFHNKENDNIANGLSRVLPGFNHDRTASAQELLYSLTGSSQEKQPEVSGQDAAAVQEIEYWSDSEHNFQDPCIGGVAIAPTHGSILIECAKCEVHATTKVNDPDRNHPTRISLVLYRHKNLFLPKHCLALWEAKMAEKARKEEECGKNGSDHVSQKNHGKQEKREPTGPQEPSYLRFIQSLAENTGSVTTDSTVTTSPYAFTQVTGPYNTFV.

The segment covering 1-11 has biased composition (basic and acidic residues); the sequence is MEQDRTTHAEG. The disordered stretch occupies residues 1-86; sequence MEQDRTTHAE…PHEDRGYSRC (86 aa). Serine 15 and serine 23 each carry phosphoserine. The segment covering 53 to 74 has biased composition (polar residues); it reads TKWQSSQSCYGISHMKGSQSSH. Phosphoserine is present on residues serine 76 and serine 97. Disordered stretches follow at residues 112–166, 340–359, 367–388, 429–470, 673–723, 832–862, 907–966, and 1009–1052; these read LDQK…FPTR, DRNL…QKET, SSKF…QSLL, IDHQ…PEKS, PQTQ…DKQR, EQAQ…AEAA, QEQQ…NGQP, and ESEN…EGCN. 5 stretches are compositionally biased toward polar residues: residues 135–158, 340–353, 367–387, 434–447, and 673–689; these read SRQP…QESS, DRNL…SEQY, SSKF…SQSL, KTSS…SVHT, and PQTQ…SNFP. A compositionally biased stretch (low complexity) spans 690-701; that stretch reads QICQQQQQQQLQ. 2 stretches are compositionally biased toward polar residues: residues 707–719 and 832–844; these read QMPQ…QGSN and EQAQ…SSLQ. Residues 907–921 show a composition bias toward low complexity; that stretch reads QEQQQTQQSQPGHNQ. 2 stretches are compositionally biased toward polar residues: residues 944–966 and 1036–1046; these read PQEN…NGQP and SDTPGEQSQNG. Serine 1036 is subject to Phosphoserine. 4 residues coordinate Zn(2+): cysteine 1048, cysteine 1106, histidine 1132, and cysteine 1134. Arginine 1174 contacts 2-oxoglutarate. Cysteine 1184, cysteine 1186, cysteine 1202, and cysteine 1211 together coordinate Zn(2+). The interval 1203 to 1216 is interaction with DNA; the sequence is SWSMYYNGCKFARS. A Glycyl lysine isopeptide (Lys-Gly) (interchain with G-Cter in ubiquitin) cross-link involves residue lysine 1212. A Zn(2+)-binding site is contributed by cysteine 1271. Residue cysteine 1287 participates in 2-oxoglutarate binding. Position 1293 (histidine 1293) interacts with Zn(2+). Fe cation-binding residues include histidine 1295 and aspartate 1297. Asparagine 1300 serves as a coordination point for substrate. Residue histidine 1329 participates in 2-oxoglutarate binding. Disordered regions lie at residues 1379–1414 and 1444–1514; these read KKKA…SSSH and LQRH…HTSD. Over residues 1387-1396 the composition is skewed to basic residues; that stretch reads AKTKKAARKR. Pro residues predominate over residues 1456-1473; sequence QPQPPQPQPQTTPQPQPQ. Polar residues predominate over residues 1480–1512; that stretch reads GNSQSVGSHCSGSTSVYTRQPTPHSPYPSSAHT. Residue histidine 1795 participates in Fe cation binding. 1810–1812 provides a ligand contact to 2-oxoglutarate; sequence RIS. 1816–1818 is a binding site for substrate; the sequence is YRH. Histidine 1826 contacts Zn(2+). Over residues 1842–1866 the composition is skewed to basic and acidic residues; that stretch reads EEECGKNGSDHVSQKNHGKQEKREP. The disordered stretch occupies residues 1842–1871; sequence EEECGKNGSDHVSQKNHGKQEKREPTGPQE.

Belongs to the TET family. As to quaternary structure, interacts with HCFC1. Interacts with OGT. Interacts with PROSER1; this interaction mediates TET2 O-GlcNAcylation and stability by promoting the interaction between OGT and TET2. Directly interacts (via C-terminus) with the DCAF1 component of the CRL4(VprBP) E3 ubiquitin-protein ligase complex. It depends on Fe(2+) as a cofactor. Zn(2+) is required as a cofactor. In terms of processing, may be glycosylated. It is unclear whether interaction with OGT leads to GlcNAcylation. According to a report, it is GlcNAcylated by OGT. In contrast, another group reports no GlcNAcylation by OGT in human ortholog. Monoubiquitinated at Lys-1212 by the DCX (DDB1-CUL4-X-box) E3 ubiquitin-protein ligase complex called CRL4(VprBP) or CUL4A-RBX1-DDB1-DCAF1/VPRBP complex; this modification promotes binding to DNA. Post-translationally, acetylated. Expressed in the brain, kidney, heart, lung, muscle and stomach. Expressed in germinal vesicle (GV) stage and MII-stage oocytes and in early embryos. Present in embryonic stem cells (ES cells).

It is found in the nucleus. Its subcellular location is the chromosome. It catalyses the reaction a 5-methyl-2'-deoxycytidine in DNA + 2-oxoglutarate + O2 = a 5-hydroxymethyl-2'-deoxycytidine in DNA + succinate + CO2. The enzyme catalyses a 5-hydroxymethyl-2'-deoxycytidine in DNA + 2-oxoglutarate + O2 = a 5-formyl-2'-deoxycytidine in DNA + succinate + CO2 + H2O. The catalysed reaction is a 5-formyl-2'-deoxycytidine in DNA + 2-oxoglutarate + O2 = a 5-carboxyl-2'-deoxycytidine in DNA + succinate + CO2 + H(+). Functionally, dioxygenase that catalyzes the conversion of the modified genomic base 5-methylcytosine (5mC) into 5-hydroxymethylcytosine (5hmC) and plays a key role in active DNA demethylation. Has a preference for 5-hydroxymethylcytosine in CpG motifs. Also mediates subsequent conversion of 5hmC into 5-formylcytosine (5fC), and conversion of 5fC to 5-carboxylcytosine (5caC). Conversion of 5mC into 5hmC, 5fC and 5caC probably constitutes the first step in cytosine demethylation. Methylation at the C5 position of cytosine bases is an epigenetic modification of the mammalian genome which plays an important role in transcriptional regulation. In addition to its role in DNA demethylation, also involved in the recruitment of the O-GlcNAc transferase OGT to CpG-rich transcription start sites of active genes, thereby promoting histone H2B GlcNAcylation by OGT. The polypeptide is Methylcytosine dioxygenase TET2 (Tet2) (Mus musculus (Mouse)).